A 113-amino-acid polypeptide reads, in one-letter code: UPF0102 protein SUN_0231 (113 aa).

Belongs to the UPF0102 family.

This chain is UPF0102 protein SUN_0231, found in Sulfurovum sp. (strain NBC37-1).